A 119-amino-acid polypeptide reads, in one-letter code: Histone H1B, sperm (119 aa).

The H15 domain maps to 8–77 (THPPVATAVV…QNKGSFRVNK (70 aa)). Residues 76 to 119 (NKTALPKKKKAAKKPKAKKVKKPKSAAKKKTNRARAPKTKKNRN) form a disordered region. The segment covering 80–119 (LPKKKKAAKKPKAKKVKKPKSAAKKKTNRARAPKTKKNRN) has biased composition (basic residues).

This sequence belongs to the histone H1/H5 family.

It is found in the nucleus. The protein resides in the chromosome. In terms of biological role, histones H1 are necessary for the condensation of nucleosome chains into higher-order structures. The chain is Histone H1B, sperm from Platynereis dumerilii (Dumeril's clam worm).